Here is a 231-residue protein sequence, read N- to C-terminus: RING finger protein 141 (231 aa).

The N-myristoyl glycine moiety is linked to residue glycine 2. The segment at 156 to 193 (CCICMDGRADLILPCAHSFCQKCIDKWSDRHRNCPICR) adopts an RING-type zinc-finger fold.

Its subcellular location is the membrane. In terms of biological role, may be involved in spermatogenesis. In Canis lupus familiaris (Dog), this protein is RING finger protein 141 (RNF141).